The chain runs to 73 residues: MAEIKHYQFNVVMTCSGCSGAVNKVLTKLEPDVSKIDISLEKQLVDVYTTLPYDFILEKIKKTGKEVRSGKQL.

In terms of domain architecture, HMA spans 4–68 (IKHYQFNVVM…KIKKTGKEVR (65 aa)). Positions 15 and 18 each coordinate Cu(+).

Belongs to the ATX1 family. In terms of assembly, homodimer. Interacts with CCC2 via the copper anion.

Its subcellular location is the cytoplasm. Its activity is regulated as follows. Tetrathiomolybdate directly and reversibly down-regulates copper delivery to secreted metalloenzymes. Its function is as follows. Copper homeostasis factor that specifically transports copper to the secretory pathway for incorporation into copper enzymes destined for the cell surface or extracellular milieu. Shuttles copper to the transport ATPase CCC2 on a post-Golgi vesicle for eventual targeting to the cell-surface high-affinity iron uptake protein FET3. Protects against oxygen toxicity. The protein is Copper chaperone ATX1 of Saccharomyces cerevisiae (strain ATCC 204508 / S288c) (Baker's yeast).